Here is a 131-residue protein sequence, read N- to C-terminus: Small ribosomal subunit protein uS8 (131 aa).

Belongs to the universal ribosomal protein uS8 family. Part of the 30S ribosomal subunit. Contacts proteins S5 and S12.

Its function is as follows. One of the primary rRNA binding proteins, it binds directly to 16S rRNA central domain where it helps coordinate assembly of the platform of the 30S subunit. This is Small ribosomal subunit protein uS8 from Rhizorhabdus wittichii (strain DSM 6014 / CCUG 31198 / JCM 15750 / NBRC 105917 / EY 4224 / RW1) (Sphingomonas wittichii).